The following is a 212-amino-acid chain: Probable NADH dehydrogenase [ubiquinone] iron-sulfur protein 8, mitochondrial (212 aa).

4Fe-4S ferredoxin-type domains follow at residues 104 to 133 (RRYPSGEERCIACKLCEAICPAQAITIEAE) and 143 to 172 (TRYDIDMTKCIYCGLCQEACPVDAIVEGPN). [4Fe-4S] cluster is bound by residues Cys113, Cys116, Cys119, Cys123, Cys152, Cys155, Cys158, and Cys162.

This sequence belongs to the complex I 23 kDa subunit family. In terms of assembly, complex I is composed of 45 different subunits This is a component of the iron-sulfur (IP) fragment of the enzyme. Requires [4Fe-4S] cluster as cofactor.

The protein resides in the mitochondrion. The enzyme catalyses a ubiquinone + NADH + 5 H(+)(in) = a ubiquinol + NAD(+) + 4 H(+)(out). Core subunit of the mitochondrial membrane respiratory chain NADH dehydrogenase (Complex I) that is believed to belong to the minimal assembly required for catalysis. Complex I functions in the transfer of electrons from NADH to the respiratory chain. The immediate electron acceptor for the enzyme is believed to be ubiquinone. The chain is Probable NADH dehydrogenase [ubiquinone] iron-sulfur protein 8, mitochondrial from Caenorhabditis elegans.